Consider the following 443-residue polypeptide: Xaa-Pro dipeptidase (443 aa).

D244, D255, H339, E384, and E423 together coordinate Mn(2+).

Belongs to the peptidase M24B family. Bacterial-type prolidase subfamily. It depends on Mn(2+) as a cofactor.

The catalysed reaction is Xaa-L-Pro dipeptide + H2O = an L-alpha-amino acid + L-proline. Functionally, splits dipeptides with a prolyl residue in the C-terminal position. The protein is Xaa-Pro dipeptidase of Pseudoalteromonas atlantica (strain T6c / ATCC BAA-1087).